A 755-amino-acid polypeptide reads, in one-letter code: Xaa-Pro dipeptidyl-peptidase (755 aa).

Residues Ser-348, Asp-468, and His-498 each act as charge relay system in the active site.

It belongs to the peptidase S15 family. As to quaternary structure, homodimer.

It localises to the cytoplasm. It catalyses the reaction Hydrolyzes Xaa-Pro-|- bonds to release unblocked, N-terminal dipeptides from substrates including Ala-Pro-|-p-nitroanilide and (sequentially) Tyr-Pro-|-Phe-Pro-|-Gly-Pro-|-Ile.. Functionally, removes N-terminal dipeptides sequentially from polypeptides having unsubstituted N-termini provided that the penultimate residue is proline. This Streptococcus thermophilus (strain CNRZ 1066) protein is Xaa-Pro dipeptidyl-peptidase.